A 344-amino-acid polypeptide reads, in one-letter code: Heat-inducible transcription repressor HrcA (344 aa).

The protein belongs to the HrcA family.

Its function is as follows. Negative regulator of class I heat shock genes (grpE-dnaK-dnaJ and groELS operons). Prevents heat-shock induction of these operons. In Streptococcus pneumoniae serotype 19F (strain G54), this protein is Heat-inducible transcription repressor HrcA.